The chain runs to 148 residues: Insoluble matrix shell protein 1 (148 aa).

The disordered stretch occupies residues 105-128; sequence KSGRTEARNTDDSGDPIIDPRTAD.

As to expression, component of the acid-insoluble organic matrix of the calcified shell.

The protein resides in the secreted. The sequence is that of Insoluble matrix shell protein 1 from Ruditapes philippinarum (Japanese carpet shell).